Consider the following 342-residue polypeptide: Trans-3-hydroxy-L-proline dehydratase (342 aa).

Ser-90 functions as the Proton acceptor in the catalytic mechanism. Residues 91 to 92 (GS), Asp-252, and 257 to 258 (GT) contribute to the substrate site.

Belongs to the proline racemase family.

It carries out the reaction trans-3-hydroxy-L-proline = 1-pyrroline-2-carboxylate + H2O. The enzyme catalyses trans-4-hydroxy-L-proline = cis-4-hydroxy-D-proline. In terms of biological role, catalyzes the dehydration of trans-3-hydroxy-L-proline (t3LHyp) to Delta(1)-pyrroline-2-carboxylate (Pyr2C). Can also catalyze the epimerization of trans-4-hydroxy-L-proline (t4LHyp) to cis-4-hydroxy-D-proline (c4DHyp), albeit with 30-fold lower efficiency. Is likely involved in both degradation pathways that convert t3LHyp to L-proline and t4LHyp to alpha-ketoglutarate, which would allow A.tumefaciens to grow on t3LHyp or t4LHyp as a sole carbon source. Displays no proline racemase activity. The sequence is that of Trans-3-hydroxy-L-proline dehydratase from Agrobacterium fabrum (strain C58 / ATCC 33970) (Agrobacterium tumefaciens (strain C58)).